Reading from the N-terminus, the 230-residue chain is uncharacterized protein (230 aa).

It to E.coli HemX N-terminal region.

This is an uncharacterized protein from Haemophilus influenzae (strain ATCC 51907 / DSM 11121 / KW20 / Rd).